Consider the following 676-residue polypeptide: tRNA 5-methylaminomethyl-2-thiouridine biosynthesis bifunctional protein MnmC (676 aa).

Residues 1–241 (MFTVTPAKIY…KRECLCGIKN (241 aa)) form a tRNA (mnm(5)s(2)U34)-methyltransferase region. Residues 268-676 (IGGGIASLFT…RKLLKGTEIK (409 aa)) are FAD-dependent cmnm(5)s(2)U34 oxidoreductase.

In the N-terminal section; belongs to the methyltransferase superfamily. tRNA (mnm(5)s(2)U34)-methyltransferase family. The protein in the C-terminal section; belongs to the DAO family. Requires FAD as cofactor.

The protein resides in the cytoplasm. It carries out the reaction 5-aminomethyl-2-thiouridine(34) in tRNA + S-adenosyl-L-methionine = 5-methylaminomethyl-2-thiouridine(34) in tRNA + S-adenosyl-L-homocysteine + H(+). Its function is as follows. Catalyzes the last two steps in the biosynthesis of 5-methylaminomethyl-2-thiouridine (mnm(5)s(2)U) at the wobble position (U34) in tRNA. Catalyzes the FAD-dependent demodification of cmnm(5)s(2)U34 to nm(5)s(2)U34, followed by the transfer of a methyl group from S-adenosyl-L-methionine to nm(5)s(2)U34, to form mnm(5)s(2)U34. The sequence is that of tRNA 5-methylaminomethyl-2-thiouridine biosynthesis bifunctional protein MnmC from Histophilus somni (strain 129Pt) (Haemophilus somnus).